A 342-amino-acid polypeptide reads, in one-letter code: tRNA-specific 2-thiouridylase MnmA (342 aa).

ATP-binding positions include 6–13 (LLSGGVDS) and Leu32. Cys92 serves as the catalytic Nucleophile. Cys92 and Cys191 form a disulfide bridge. Gly116 provides a ligand contact to ATP. Residues 138–140 (KDQ) are interaction with tRNA. Catalysis depends on Cys191, which acts as the Cysteine persulfide intermediate. Residues 293–294 (RY) form an interaction with tRNA region.

The protein belongs to the MnmA/TRMU family.

The protein resides in the cytoplasm. It carries out the reaction S-sulfanyl-L-cysteinyl-[protein] + uridine(34) in tRNA + AH2 + ATP = 2-thiouridine(34) in tRNA + L-cysteinyl-[protein] + A + AMP + diphosphate + H(+). Its function is as follows. Catalyzes the 2-thiolation of uridine at the wobble position (U34) of tRNA, leading to the formation of s(2)U34. This is tRNA-specific 2-thiouridylase MnmA from Helicobacter acinonychis (strain Sheeba).